An 817-amino-acid chain; its full sequence is Neurabin-2 (817 aa).

Disordered regions lie at residues 1–52 (MMKT…KYGS) and 64–163 (MGTT…GGDK). 2 actin-binding regions span residues 1 to 154 (MMKT…FERS) and 164 to 282 (EAVA…QHRV). Serine 15 carries the phosphoserine; by MAPK1 modification. The residue at position 17 (serine 17) is a Phosphoserine; by CDK5. Phosphoserine; by PKA is present on serine 94. Residues serine 100 and serine 116 each carry the phosphoserine modification. The segment at 100–371 (SLNENVDHSA…LERGVDNGRA (272 aa)) is interaction with D(2) dopamine receptor. The segment covering 131–141 (SAQPAPPPHPP) has biased composition (pro residues). Positions 169 to 255 (RLLRQERAGL…KRSRVFQPPP (87 aa)) are interaction with ADRA2A, ADRA2B and ADRA2C. Serine 192 carries the phosphoserine modification. At threonine 193 the chain carries Phosphothreonine. Serine 205 carries the phosphoserine; by MAPK1 modification. Threonine 207 is subject to Phosphothreonine. Positions 216-451 (EKADSRTGLH…DPAPSRKIHF (236 aa)) are disordered. The segment covering 290–301 (KPREVRKIKPVE) has biased composition (basic and acidic residues). Composition is skewed to low complexity over residues 332 to 341 (STPATTASPA) and 399 to 409 (SGLGEDSGGSA). Residues 410–425 (LEEDDEEDEEDGEPPY) are compositionally biased toward acidic residues. The tract at residues 417–494 (DEEDGEPPYE…LEKRVERLEL (78 aa)) is interaction with protein phosphatase 1. Serine 438 is subject to Phosphoserine. Residues 447 to 451 (RKIHF) carry the PP1-binding motif motif. Residues 480-525 (SAEYELEKRVERLELFPVELEKDSEGLGISIIGMGAGADMGLEKLG) form an interaction with RGS2 region. The 89-residue stretch at 496–584 (PVELEKDSEG…RVRFMIGRER (89 aa)) folds into the PDZ domain. The stretch at 595–616 (IQQTLEQERWQREMMEQRYAQY) forms a coiled coil. The tract at residues 595 to 816 (IQQTLEQERW…NLQTLRNSNS (222 aa)) is interaction with TGN38. Serine 658 carries the post-translational modification Phosphoserine. A coiled-coil region spans residues 665 to 816 (EKLVHKFKEL…NLQTLRNSNS (152 aa)).

In terms of assembly, possibly exists as a homodimer, homotrimer or a homotetramer. Interacts with F-actin, PPP1CA, neurabin-1, TGN38 and D(2) dopamine receptor. Interacts with RGS1, RGS2, RGS4, RGS19 and ADRA1B, ADRA2A, ADRA2B, ADRA2C, CDKN2A, PPP1R2, RASGFR1 and TIAM1. Interacts (via C-terminus) with SPATA13 (via C-terminal tail). Interacts with DCLK2. Interacts with ADRA2B. Stimulation of D1 (but not D2) dopamine receptors induces Ser-94 phosphorylation. Dephosphorylation of Ser-94 is mediated mainly by PP1 and to a lesser extent by PP2A. Phosphorylation of spinophilin disrupts its association with F-actin, but does not affect its binding to PP1.

It is found in the cytoplasm. It localises to the cytoskeleton. The protein localises to the nucleus. Its subcellular location is the postsynaptic density. The protein resides in the cell junction. It is found in the adherens junction. It localises to the cell projection. The protein localises to the dendritic spine. Its subcellular location is the cell membrane. The protein resides in the lamellipodium. It is found in the filopodium. It localises to the ruffle membrane. Its function is as follows. Seems to act as a scaffold protein in multiple signaling pathways. Modulates excitatory synaptic transmission and dendritic spine morphology. Binds to actin filaments (F-actin) and shows cross-linking activity. Binds along the sides of the F-actin. May play an important role in linking the actin cytoskeleton to the plasma membrane at the synaptic junction. Believed to target protein phosphatase 1/PP1 to dendritic spines, which are rich in F-actin, and regulates its specificity toward ion channels and other substrates, such as AMPA-type and NMDA-type glutamate receptors. Plays a role in regulation of G-protein coupled receptor signaling, including dopamine D2 receptors and alpha-adrenergic receptors. May establish a signaling complex for dopaminergic neurotransmission through D2 receptors by linking receptors downstream signaling molecules and the actin cytoskeleton. Binds to ADRA1B and RGS2 and mediates regulation of ADRA1B signaling. May confer to Rac signaling specificity by binding to both, RacGEFs and Rac effector proteins. Probably regulates p70 S6 kinase activity by forming a complex with TIAM1. Required for hepatocyte growth factor (HGF)-induced cell migration. The protein is Neurabin-2 (Ppp1r9b) of Mus musculus (Mouse).